A 295-amino-acid polypeptide reads, in one-letter code: 2-dehydropantoate 2-reductase (295 aa).

NADP(+)-binding positions include 9-14 (GPGAVG), asparagine 100, and alanine 126. Asparagine 100 provides a ligand contact to substrate. Lysine 177 functions as the Proton donor in the catalytic mechanism. 2 residues coordinate substrate: asparagine 181 and serine 246. Glutamate 258 provides a ligand contact to NADP(+).

The protein belongs to the ketopantoate reductase family.

It localises to the cytoplasm. It carries out the reaction (R)-pantoate + NADP(+) = 2-dehydropantoate + NADPH + H(+). Its pathway is cofactor biosynthesis; (R)-pantothenate biosynthesis; (R)-pantoate from 3-methyl-2-oxobutanoate: step 2/2. Catalyzes the NADPH-dependent reduction of ketopantoate into pantoic acid. This Mycobacterium tuberculosis (strain CDC 1551 / Oshkosh) protein is 2-dehydropantoate 2-reductase.